The primary structure comprises 210 residues: Fimbriae Z protein (210 aa).

The Response regulatory domain maps to 5-121 (SVIIMDEHPI…DIYNAVKMIL (117 aa)). Aspartate 56 is subject to 4-aspartylphosphate. The 66-residue stretch at 143 to 208 (GGHHDMPLSN…ELIDYAKSHE (66 aa)) folds into the HTH luxR-type domain. Positions 167–186 (NKEIAEQLLLSNKTISAHKA) form a DNA-binding region, H-T-H motif.

The protein resides in the cytoplasm. This is Fimbriae Z protein (fimZ) from Salmonella typhimurium (strain LT2 / SGSC1412 / ATCC 700720).